A 791-amino-acid chain; its full sequence is Splicing factor 3A subunit 1 (791 aa).

Positions 1 to 41 (MQAGPVQAVPPPPPVATESKQPIEEEASSKEDPTPSKPVVG) are disordered. A Glycyl lysine isopeptide (Lys-Gly) (interchain with G-Cter in SUMO2) cross-link involves residue Lys20. The span at 21–34 (QPIEEEASSKEDPT) shows a compositional bias: basic and acidic residues. One copy of the SURP motif 1 repeat lies at 52 to 94 (IVDKTASFVARNGPEFEARIRQNEINNPKFNFLNPNDPYHAYY). At Lys55 the chain carries N6-acetyllysine. Residue Lys131 forms a Glycyl lysine isopeptide (Lys-Gly) (interchain with G-Cter in SUMO2) linkage. One copy of the SURP motif 2 repeat lies at 166-208 (VVKLTAQFVARNGRQFLTQLMQKEQRNYQFDFLRPQHSLFNYF). Residues 318 to 411 (GESEEVEMEV…APAPDEYLVS (94 aa)) form a disordered region. Residues Ser320 and Ser329 each carry the phosphoserine modification. A compositionally biased stretch (acidic residues) spans 320-336 (SEEVEMEVESDEEDQEK). Polar residues predominate over residues 340-351 (TPSQLDQDTQVQ). Over residues 352-362 (DMDEGSDDEEE) the composition is skewed to acidic residues. At Ser357 the chain carries Phosphoserine. Pro residues predominate over residues 366–382 (VPPPPETPMPPPLPPTP). Basic and acidic residues predominate over residues 386-395 (IVRKDYDPKA). Position 411 is a phosphoserine (Ser411). A Glycyl lysine isopeptide (Lys-Gly) (interchain with G-Cter in SUMO2) cross-link involves residue Lys422. At Ser449 the chain carries Phosphoserine. Position 454 is a phosphotyrosine (Tyr454). A compositionally biased stretch (basic and acidic residues) spans 486–500 (IGEEEIQKPEEKVTW). 3 disordered regions span residues 486–516 (IGEE…AAQA), 528–582 (HKAK…AMPP), and 664–684 (PMPP…KKLK). Lys497 is covalently cross-linked (Glycyl lysine isopeptide (Lys-Gly) (interchain with G-Cter in SUMO2)). Ser506 carries the phosphoserine modification. Polar residues predominate over residues 507 to 516 (MARTQQAAQA). A Glycyl lysine isopeptide (Lys-Gly) (interchain with G-Cter in SUMO2) cross-link involves residue Lys540. The segment covering 561–570 (ATNIPSSAPP) has biased composition (polar residues). The segment covering 664–673 (PMPPVHPPPP) has biased composition (pro residues). The interval 678 to 700 (PPSKKLKTEDSLMPEEEFLRRNK) is required and sufficient for nuclear import. Residue Lys684 forms a Glycyl lysine isopeptide (Lys-Gly) (interchain with G-Cter in SUMO2) linkage. The Ubiquitin-like domain maps to 705 to 788 (IKVQVPNMQD…IHLALKERGG (84 aa)). The residue at position 757 (Tyr757) is a Phosphotyrosine.

Component of the 17S U2 SnRNP complex, a ribonucleoprotein complex that contains small nuclear RNA (snRNA) U2 and a number of specific proteins. Part of the SF3A subcomplex of the 17S U2 SnRNP complex which is composed of three subunits; SF3A3/SAP61, SF3A2/SAP62 and SF3A1/SAP114. SF3A associates with the splicing factor SF3B and a 12S RNA unit to form the mature 17S U2 small nuclear ribonucleoprotein complex (17S U2 snRNP). SF3A1 functions as a scaffold that interacts directly with both SF3A2 and SF3A3. Identified in the spliceosome 'E' complex, a precursor of the spliceosome 'A' complex. Identified in the spliceosome 'A' and 'B' complexes. Identified in the spliceosome 'C' complex. Interacts with P2RX6; resulting in a reduction of the splicing activity.

It is found in the nucleus. It localises to the nucleus speckle. Component of the 17S U2 SnRNP complex of the spliceosome, a large ribonucleoprotein complex that removes introns from transcribed pre-mRNAs. The 17S U2 SnRNP complex (1) directly participates in early spliceosome assembly and (2) mediates recognition of the intron branch site during pre-mRNA splicing by promoting the selection of the pre-mRNA branch-site adenosine, the nucleophile for the first step of splicing. Within the 17S U2 SnRNP complex, SF3A1 is part of the SF3A subcomplex that contributes to the assembly of the 17S U2 snRNP, and the subsequent assembly of the pre-spliceosome 'E' complex and the pre-catalytic spliceosome 'A' complex. Involved in pre-mRNA splicing as a component of pre-catalytic spliceosome 'B' complexes. This chain is Splicing factor 3A subunit 1 (Sf3a1), found in Mus musculus (Mouse).